A 68-amino-acid chain; its full sequence is MATGTVKWFNDAKGFGFITQDGGGEDVFCHHSAINMDGFRTLQEGQKVEFEVTRGPKGLQAQNVRSIP.

In terms of domain architecture, CSD spans 4 to 64; the sequence is GTVKWFNDAK…GPKGLQAQNV (61 aa).

The protein localises to the cytoplasm. The chain is Cold shock-like protein CspA (cspA) from Stigmatella aurantiaca (strain DW4/3-1).